We begin with the raw amino-acid sequence, 498 residues long: Protein flp (498 aa).

The next 4 helical transmembrane spans lie at 6–26 (LYFL…IYIT), 389–409 (FNIV…FSAY), 433–453 (LTLC…YLIL), and 471–491 (LALI…LLFL).

It is found in the cell membrane. Its precise function is unknown. Has no penicillin-binding activity and is not involved in methicillin resistance. The sequence is that of Protein flp (flp) from Staphylococcus aureus (strain Mu50 / ATCC 700699).